The sequence spans 182 residues: Dual-action ribosomal maturation protein DarP (182 aa).

The interval Met-1–Glu-20 is disordered.

Belongs to the DarP family.

The protein resides in the cytoplasm. Member of a network of 50S ribosomal subunit biogenesis factors which assembles along the 30S-50S interface, preventing incorrect 23S rRNA structures from forming. Promotes peptidyl transferase center (PTC) maturation. This is Dual-action ribosomal maturation protein DarP from Sodalis glossinidius (strain morsitans).